Consider the following 630-residue polypeptide: Subtilisin-like protease 1 (630 aa).

The N-terminal stretch at 1 to 25 (MVLTRRAALLLCPWVIQLVIKRTLA) is a signal peptide. Positions 26-202 (GDILPNEGKK…IESDKLVGAD (177 aa)) are cleaved as a propeptide — inhibition peptide. Positions 72 to 125 (NAYNPDRDAPKEELQKLQDQQETPSKQPNNLRNSPQKRAEKKESPGKNKKSLRL) are disordered. A compositionally biased stretch (basic and acidic residues) spans 76-87 (PDRDAPKEELQK). Over residues 94-107 (TPSKQPNNLRNSPQ) the composition is skewed to polar residues. The span at 108–117 (KRAEKKESPG) shows a compositional bias: basic and acidic residues. E129, N130, T133, P135, and G190 together coordinate Ca(2+). The disordered stretch occupies residues 230–254 (LEVPSGESPPSHAASSGSPFDDDDD). Residues 233–248 (PSGESPPSHAASSGSP) are compositionally biased toward low complexity. D281 serves as a coordination point for Ca(2+). The Peptidase S8 domain occupies 287-604 (QWGLDLARLD…GGYVDILRAV (318 aa)). 3 cysteine pairs are disulfide-bonded: C313-C423, C402-C419, and C465-C478. D316 functions as the Charge relay system in the catalytic mechanism. Residues D325, E336, R340, V343, D344, D345, D346, N348, V350, D352, and D353 each coordinate Ca(2+). H372 acts as the Charge relay system in catalysis. Ca(2+)-binding residues include V383, N386, I388, and I390. N546 carries N-linked (GlcNAc...) asparagine glycosylation. S549 acts as the Charge relay system in catalysis.

The protein belongs to the peptidase S8 family. As to quaternary structure, heterodimer between p54 form and prodomain p31; the interaction inhibits p54 catalytic activity. Heterodimer p31-p54 is monomeric at basic pH and dimeric at acidic pH; dimerization is driven by the N-terminal prodomain (p31). Ca(2+) is required as a cofactor. The prodomain (p31) is cleaved, probably by autocatalysis, and remains non-covalently associated with the p54 form as an inhibitor. p54 is further cleaved into the p45/p47 forms. In terms of processing, the relevance of the N-glycosylation is not clear. In an insect expression system, SUB1 glycosylation appears to affect its processing into the active mature form suggesting that SUB1 may not be N-glycosylated in parasites.

The protein resides in the secreted. Its subcellular location is the parasitophorous vacuole lumen. The catalysed reaction is Hydrolysis of proteins with broad specificity for peptide bonds, and a preference for a large uncharged residue in P1. Hydrolyzes peptide amides.. Inhibited by peptidic alpha-ketoamide inhibitors. Inhibited by the alpha-ketoamide nonapeptide JMV5126 (isocaproyl-KITAQ(CO)DDEE-NH2). Inhibited by the alpha-ketoamide peptide MAM-117. Functionally, serine protease which plays an essential role in merozoite invasion of and egress from host erythrocytes by processing and activating various merozoite surface and parasitophorous vacuole proteins. In Plasmodium vivax, this protein is Subtilisin-like protease 1.